A 356-amino-acid chain; its full sequence is MMSRQAFLCSLGSLYLSLLFVFLLMDVYARPANNSALKEKPADSRDENEILPPDHLNGVKMEMDGHLNKEFHQEVFLGKEMEEFEEDSEPRKNRKKLMVIFSKVDIDNDKKISAKEMQRWIMEKTDEHFQEAVEENKMHFRAVDPDGDGHVSWDEYKIKFLASKGLNEKEIAEKIKNNEELKIDEETQEVLDNLKDRWYQADNPPPDMLLNEEEFLSFLHPEHSRGMLKFMVKEIIRDLDQDGDKKLTLSEFISLPVGTVENQQAQDIDDDWVKDRRKEFEDVIDANHDGIVTMEELEEYMDPMNEYNALNEAKQMIAVADENQNHHLELEEILKYSEYFTGSKLMDYARNVHEEF.

Positions 1-29 (MMSRQAFLCSLGSLYLSLLFVFLLMDVYA) are cleaved as a signal peptide. Asn-33 is a glycosylation site (N-linked (GlcNAc...) asparagine). EF-hand domains lie at 92–127 (KNRK…KTDE), 131–166 (EAVE…SKGL), 227–262 (MLKF…TVEN), 272–307 (WVKD…MNEY), and 308–343 (NALN…FTGS). 24 residues coordinate Ca(2+): Asp-105, Asp-107, Asp-109, Lys-111, Glu-116, Asp-144, Asp-146, Asp-148, His-150, Glu-155, Asp-240, Asp-242, Asp-244, Lys-246, Glu-251, Asp-285, Asn-287, Asp-289, Glu-296, Asp-321, Asn-323, Asn-325, His-327, and Glu-332.

Belongs to the CREC family.

It is found in the golgi apparatus lumen. In terms of biological role, may regulate calcium-dependent activities in the endoplasmic reticulum lumen or post-ER compartment. This chain is 45 kDa calcium-binding protein (SDF4), found in Gallus gallus (Chicken).